We begin with the raw amino-acid sequence, 211 residues long: MRVIGLTGGIATGKSTFAALLRARGAPVVDADALARAAVEPGTPALAEIARTFGAEVLRPDGALDRKALGARVFADPGARRRLEAITHPAVRLAMREETARLAAQGHPLAFYDTPLLYEVGLEALLDAVVVVWAPRDVQRERLMRRDGLGGAEADARLAAQLPVDEKAARADFVVENAGAPEALAGKADRLLADLRGGRGRRLPNAPPVRY.

A DPCK domain is found at 3 to 206 (VIGLTGGIAT…GGRGRRLPNA (204 aa)). Position 11–16 (11–16 (ATGKST)) interacts with ATP.

It belongs to the CoaE family.

It is found in the cytoplasm. The enzyme catalyses 3'-dephospho-CoA + ATP = ADP + CoA + H(+). It participates in cofactor biosynthesis; coenzyme A biosynthesis; CoA from (R)-pantothenate: step 5/5. In terms of biological role, catalyzes the phosphorylation of the 3'-hydroxyl group of dephosphocoenzyme A to form coenzyme A. The polypeptide is Dephospho-CoA kinase (Anaeromyxobacter dehalogenans (strain 2CP-C)).